A 260-amino-acid chain; its full sequence is Ubiquinone/menaquinone biosynthesis C-methyltransferase UbiE (260 aa).

S-adenosyl-L-methionine-binding positions include Thr83, Asp104, and 132–133 (NA).

This sequence belongs to the class I-like SAM-binding methyltransferase superfamily. MenG/UbiE family.

The enzyme catalyses a 2-demethylmenaquinol + S-adenosyl-L-methionine = a menaquinol + S-adenosyl-L-homocysteine + H(+). The catalysed reaction is a 2-methoxy-6-(all-trans-polyprenyl)benzene-1,4-diol + S-adenosyl-L-methionine = a 5-methoxy-2-methyl-3-(all-trans-polyprenyl)benzene-1,4-diol + S-adenosyl-L-homocysteine + H(+). It functions in the pathway quinol/quinone metabolism; menaquinone biosynthesis; menaquinol from 1,4-dihydroxy-2-naphthoate: step 2/2. Its pathway is cofactor biosynthesis; ubiquinone biosynthesis. In terms of biological role, methyltransferase required for the conversion of demethylmenaquinol (DMKH2) to menaquinol (MKH2) and the conversion of 2-polyprenyl-6-methoxy-1,4-benzoquinol (DDMQH2) to 2-polyprenyl-3-methyl-6-methoxy-1,4-benzoquinol (DMQH2). The sequence is that of Ubiquinone/menaquinone biosynthesis C-methyltransferase UbiE from Bartonella bacilliformis (strain ATCC 35685 / KC583 / Herrer 020/F12,63).